The sequence spans 222 residues: Phosphoribosylformylglycinamidine synthase subunit PurQ (222 aa).

A Glutamine amidotransferase type-1 domain is found at 3–222 (SAVIQLPGLN…LFESVLGRAA (220 aa)). The active-site Nucleophile is Cys86. Catalysis depends on residues His196 and Glu198.

As to quaternary structure, part of the FGAM synthase complex composed of 1 PurL, 1 PurQ and 2 PurS subunits.

Its subcellular location is the cytoplasm. The catalysed reaction is N(2)-formyl-N(1)-(5-phospho-beta-D-ribosyl)glycinamide + L-glutamine + ATP + H2O = 2-formamido-N(1)-(5-O-phospho-beta-D-ribosyl)acetamidine + L-glutamate + ADP + phosphate + H(+). It carries out the reaction L-glutamine + H2O = L-glutamate + NH4(+). It participates in purine metabolism; IMP biosynthesis via de novo pathway; 5-amino-1-(5-phospho-D-ribosyl)imidazole from N(2)-formyl-N(1)-(5-phospho-D-ribosyl)glycinamide: step 1/2. In terms of biological role, part of the phosphoribosylformylglycinamidine synthase complex involved in the purines biosynthetic pathway. Catalyzes the ATP-dependent conversion of formylglycinamide ribonucleotide (FGAR) and glutamine to yield formylglycinamidine ribonucleotide (FGAM) and glutamate. The FGAM synthase complex is composed of three subunits. PurQ produces an ammonia molecule by converting glutamine to glutamate. PurL transfers the ammonia molecule to FGAR to form FGAM in an ATP-dependent manner. PurS interacts with PurQ and PurL and is thought to assist in the transfer of the ammonia molecule from PurQ to PurL. This is Phosphoribosylformylglycinamidine synthase subunit PurQ from Chelativorans sp. (strain BNC1).